The chain runs to 86 residues: Large ribosomal subunit protein bL31 (86 aa).

A disordered region spans residues 65–86 (YGMGSANSATSKEQKEEKDSKK). A compositionally biased stretch (basic and acidic residues) spans 76–86 (KEQKEEKDSKK).

The protein belongs to the bacterial ribosomal protein bL31 family. Type A subfamily. Part of the 50S ribosomal subunit.

In terms of biological role, binds the 23S rRNA. The chain is Large ribosomal subunit protein bL31 from Prochlorococcus marinus (strain AS9601).